We begin with the raw amino-acid sequence, 86 residues long: Large ribosomal subunit protein bL27 (86 aa).

Gly residues predominate over residues 1–10 (MAQKKGGGST). A disordered region spans residues 1–21 (MAQKKGGGSTRNGRDSESKRL).

The protein belongs to the bacterial ribosomal protein bL27 family.

In Ralstonia nicotianae (strain ATCC BAA-1114 / GMI1000) (Ralstonia solanacearum), this protein is Large ribosomal subunit protein bL27.